The chain runs to 625 residues: 1-deoxy-D-xylulose-5-phosphate synthase (625 aa).

Thiamine diphosphate-binding positions include His-80 and 121-123 (GHS). Asp-152 contacts Mg(2+). Residues 153–154 (GA), Asn-181, Tyr-290, and Glu-371 each bind thiamine diphosphate. Residue Asn-181 participates in Mg(2+) binding.

The protein belongs to the transketolase family. DXPS subfamily. Homodimer. Mg(2+) is required as a cofactor. Thiamine diphosphate serves as cofactor.

It carries out the reaction D-glyceraldehyde 3-phosphate + pyruvate + H(+) = 1-deoxy-D-xylulose 5-phosphate + CO2. Its pathway is metabolic intermediate biosynthesis; 1-deoxy-D-xylulose 5-phosphate biosynthesis; 1-deoxy-D-xylulose 5-phosphate from D-glyceraldehyde 3-phosphate and pyruvate: step 1/1. Functionally, catalyzes the acyloin condensation reaction between C atoms 2 and 3 of pyruvate and glyceraldehyde 3-phosphate to yield 1-deoxy-D-xylulose-5-phosphate (DXP). This Haemophilus influenzae (strain 86-028NP) protein is 1-deoxy-D-xylulose-5-phosphate synthase.